The sequence spans 690 residues: Eukaryotic translation initiation factor 3 subunit B (690 aa).

Basic and acidic residues predominate over residues 1–11 (MAKKKSEEHSG). The tract at residues 1–33 (MAKKKSEEHSGADANDSDYNEEPNFDDPPGYVD) is disordered. Residues 15–25 (NDSDYNEEPNF) show a composition bias toward acidic residues. An RRM domain is found at 57–141 (SVVVVDNMPK…YTFAVNLFTD (85 aa)). WD repeat units follow at residues 207–246 (TRER…KIQK), 292–331 (GDGM…LLDL), 334–369 (IKIA…TLME), 442–484 (EIRE…KPSL), and 530–575 (PDHF…IRRT). A coiled-coil region spans residues 613–646 (EQKDRLRLTRASKELLEKRAQLRETFMEYRNKRI).

The protein belongs to the eIF-3 subunit B family. Component of the eukaryotic translation initiation factor 3 (eIF-3) complex. The eIF-3 complex interacts with pix. Interacts with mxt.

The protein resides in the cytoplasm. Its function is as follows. RNA-binding component of the eukaryotic translation initiation factor 3 (eIF-3) complex, which is involved in protein synthesis of a specialized repertoire of mRNAs and, together with other initiation factors, stimulates binding of mRNA and methionyl-tRNAi to the 40S ribosome. The eIF-3 complex specifically targets and initiates translation of a subset of mRNAs involved in cell proliferation. The protein is Eukaryotic translation initiation factor 3 subunit B of Drosophila mojavensis (Fruit fly).